The chain runs to 204 residues: Small ribosomal subunit protein uS7 (204 aa).

Met-1 carries the post-translational modification N-acetylmethionine. Thr-2 bears the N-acetylthreonine; in 40S ribosomal protein S5, N-terminally processed mark. At Thr-14 the chain carries Phosphothreonine. Residue Lys-47 is modified to N6-acetyllysine; alternate. Lys-47 is covalently cross-linked (Glycyl lysine isopeptide (Lys-Gly) (interchain with G-Cter in SUMO2); alternate). Ser-142 carries the phosphoserine modification.

It belongs to the universal ribosomal protein uS7 family. As to quaternary structure, component of the small ribosomal subunit. Part of the small subunit (SSU) processome, composed of more than 70 proteins and the RNA chaperone small nucleolar RNA (snoRNA) U3.

The protein localises to the cytoplasm. It localises to the nucleus. It is found in the nucleolus. Functionally, component of the small ribosomal subunit. The ribosome is a large ribonucleoprotein complex responsible for the synthesis of proteins in the cell. Part of the small subunit (SSU) processome, first precursor of the small eukaryotic ribosomal subunit. During the assembly of the SSU processome in the nucleolus, many ribosome biogenesis factors, an RNA chaperone and ribosomal proteins associate with the nascent pre-rRNA and work in concert to generate RNA folding, modifications, rearrangements and cleavage as well as targeted degradation of pre-ribosomal RNA by the RNA exosome. The protein is Small ribosomal subunit protein uS7 (RPS5) of Bos taurus (Bovine).